Reading from the N-terminus, the 201-residue chain is FMN-dependent NADH:quinone oxidoreductase (201 aa).

FMN is bound by residues Ser10, 16 to 18, and 96 to 99; these read SQS and MYNF.

The protein belongs to the azoreductase type 1 family. As to quaternary structure, homodimer. FMN is required as a cofactor.

The catalysed reaction is 2 a quinone + NADH + H(+) = 2 a 1,4-benzosemiquinone + NAD(+). The enzyme catalyses N,N-dimethyl-1,4-phenylenediamine + anthranilate + 2 NAD(+) = 2-(4-dimethylaminophenyl)diazenylbenzoate + 2 NADH + 2 H(+). Quinone reductase that provides resistance to thiol-specific stress caused by electrophilic quinones. Functionally, also exhibits azoreductase activity. Catalyzes the reductive cleavage of the azo bond in aromatic azo compounds to the corresponding amines. The chain is FMN-dependent NADH:quinone oxidoreductase from Sodalis glossinidius (strain morsitans).